Reading from the N-terminus, the 494-residue chain is Ammonium transporter Rh type C (494 aa).

The Cytoplasmic portion of the chain corresponds to 1 to 22 (MGNFIQGCKDYFSQQKNTNIRL). Residues 23–43 (TLPVVCFVWQIAMIILFGVFI) traverse the membrane as a helical segment. Topologically, residues 44–74 (RYDEESDTHWVETKAHDNITSDIENDFYFRY) are extracellular. Asn61 is a glycosylation site (N-linked (GlcNAc...) asparagine). The chain crosses the membrane as a helical span at residues 75–95 (PSFQDVHVMIFVGFGFLMTFL). Topologically, residues 96 to 99 (KRYS) are cytoplasmic. A helical transmembrane segment spans residues 100 to 120 (FGAVGFNFLIASFGLQWALLM). At 121–133 (QGWFHSLDPQTGK) the chain is on the extracellular side. A helical membrane pass occupies residues 134–154 (IFIGVESLINADFCVAGCLIA). Over 155 to 166 (YGAVLGKVSPVQ) the chain is Cytoplasmic. A helical membrane pass occupies residues 167-187 (LLVMTLFGVTLFAVEEYIILN). Topologically, residues 188-194 (LLHARDA) are extracellular. Residues 195-215 (GGSMVIHTFGGYYGLTISWVL) traverse the membrane as a helical segment. Residues 216–234 (YRPNLHQSKRMQGSVYHSD) are Cytoplasmic-facing. The helical transmembrane segment at 235–255 (IFAMIGTLFLWMFWPSFNSAI) threads the bilayer. The Extracellular segment spans residues 256–265 (TDHGDGQHRA). A helical membrane pass occupies residues 266–286 (VINTYLCLASTVLTTVAISSF). The Cytoplasmic segment spans residues 287 to 297 (SQKTGKLDMVH). Residues 298-318 (IQNSTLAGGVALGTAAEFMIS) form a helical membrane-spanning segment. Position 319 (Pro319) is a topological domain, extracellular. Residues 320–340 (YGALIVGFLCGIISTMGYIFI) form a helical membrane-spanning segment. At 341–358 (SPFLEKTLKIQDTCGIHN) the chain is on the cytoplasmic side. Residues 359–379 (LHAMPGVIGGIVGAITAAAAS) form a helical membrane-spanning segment. Residues 380 to 411 (ESVYGKHALINTFDFTGDFKDRTVLTQGGYQA) lie on the Extracellular side of the membrane. The helical transmembrane segment at 412–432 (AGMCVSIVFGVAGGAIVGSIL) threads the bilayer. Topologically, residues 433 to 494 (KLPIWGDPAD…SNFSVEHCES (62 aa)) are cytoplasmic.

The protein belongs to the ammonium transporter (TC 2.A.49) family. Rh subfamily. Homotrimer.

The protein localises to the apical cell membrane. Functionally, functions as an ammonia transporter. May play a role in the elimination of ammonia in the gill. In Oncorhynchus mykiss (Rainbow trout), this protein is Ammonium transporter Rh type C (rhcg).